The chain runs to 952 residues: Isoleucine--tRNA ligase (952 aa).

The 'HIGH' region motif lies at 60 to 70 (PYANGSLHIGH). Residue glutamate 562 coordinates L-isoleucyl-5'-AMP. Residues 603-607 (KMSKS) carry the 'KMSKS' region motif. Lysine 606 lines the ATP pocket. Zn(2+)-binding residues include cysteine 921, cysteine 924, cysteine 941, and cysteine 944.

It belongs to the class-I aminoacyl-tRNA synthetase family. IleS type 1 subfamily. As to quaternary structure, monomer. Zn(2+) is required as a cofactor.

The protein localises to the cytoplasm. The catalysed reaction is tRNA(Ile) + L-isoleucine + ATP = L-isoleucyl-tRNA(Ile) + AMP + diphosphate. Its function is as follows. Catalyzes the attachment of isoleucine to tRNA(Ile). As IleRS can inadvertently accommodate and process structurally similar amino acids such as valine, to avoid such errors it has two additional distinct tRNA(Ile)-dependent editing activities. One activity is designated as 'pretransfer' editing and involves the hydrolysis of activated Val-AMP. The other activity is designated 'posttransfer' editing and involves deacylation of mischarged Val-tRNA(Ile). This Microcystis aeruginosa (strain NIES-843 / IAM M-2473) protein is Isoleucine--tRNA ligase.